Reading from the N-terminus, the 208-residue chain is Uracil phosphoribosyltransferase (208 aa).

Residues Arg78, Arg103, and 130–138 (DPMLATGGS) each bind 5-phospho-alpha-D-ribose 1-diphosphate. Uracil is bound by residues Ile193 and 198–200 (GDA). 5-phospho-alpha-D-ribose 1-diphosphate is bound at residue Asp199.

The protein belongs to the UPRTase family. Mg(2+) serves as cofactor.

The catalysed reaction is UMP + diphosphate = 5-phospho-alpha-D-ribose 1-diphosphate + uracil. Its pathway is pyrimidine metabolism; UMP biosynthesis via salvage pathway; UMP from uracil: step 1/1. Its activity is regulated as follows. Allosterically activated by GTP. Functionally, catalyzes the conversion of uracil and 5-phospho-alpha-D-ribose 1-diphosphate (PRPP) to UMP and diphosphate. The sequence is that of Uracil phosphoribosyltransferase from Sodalis glossinidius (strain morsitans).